The chain runs to 258 residues: Imidazole glycerol phosphate synthase subunit HisF (258 aa).

Active-site residues include aspartate 11 and aspartate 130.

The protein belongs to the HisA/HisF family. In terms of assembly, heterodimer of HisH and HisF.

It localises to the cytoplasm. It catalyses the reaction 5-[(5-phospho-1-deoxy-D-ribulos-1-ylimino)methylamino]-1-(5-phospho-beta-D-ribosyl)imidazole-4-carboxamide + L-glutamine = D-erythro-1-(imidazol-4-yl)glycerol 3-phosphate + 5-amino-1-(5-phospho-beta-D-ribosyl)imidazole-4-carboxamide + L-glutamate + H(+). The protein operates within amino-acid biosynthesis; L-histidine biosynthesis; L-histidine from 5-phospho-alpha-D-ribose 1-diphosphate: step 5/9. In terms of biological role, IGPS catalyzes the conversion of PRFAR and glutamine to IGP, AICAR and glutamate. The HisF subunit catalyzes the cyclization activity that produces IGP and AICAR from PRFAR using the ammonia provided by the HisH subunit. This is Imidazole glycerol phosphate synthase subunit HisF from Stenotrophomonas maltophilia (strain K279a).